The chain runs to 345 residues: MKVAIIGATGYGGIELIRLLEQHPYFSIASLHSFSQVGECITNVYPHFQNVLVHTLQEIDAEEIVKEAEIVFLATPAGVSAELTPKLLAVGLKVIDLSGDFRMKDPFIYEQWYKRAAAKEEILSKAVYGLSEWKRSEVQNANLIANPGCFATAALLATLPLVRSGIIEEDSIIIDAKSGVSGAGKTPTTMTHFPELYDNLRIYKVNEHQHVPEIEQMLAEWNRETKPITFSTHLIPISRGIMVTLYAKVKREMEIEQLQKLYEETYEQSAFVRIRTQGEFPSPKEVRGSNYCDMGIAYDERTGRVTVVSVIDNMMKGAAGQAIQNANIIAGLEETTGLQHMPLYL.

Cysteine 149 is a catalytic residue.

This sequence belongs to the NAGSA dehydrogenase family. Type 1 subfamily.

The protein localises to the cytoplasm. It carries out the reaction N-acetyl-L-glutamate 5-semialdehyde + phosphate + NADP(+) = N-acetyl-L-glutamyl 5-phosphate + NADPH + H(+). The protein operates within amino-acid biosynthesis; L-arginine biosynthesis; N(2)-acetyl-L-ornithine from L-glutamate: step 3/4. Functionally, catalyzes the NADPH-dependent reduction of N-acetyl-5-glutamyl phosphate to yield N-acetyl-L-glutamate 5-semialdehyde. This chain is N-acetyl-gamma-glutamyl-phosphate reductase, found in Bacillus cereus (strain ATCC 10987 / NRS 248).